An 87-amino-acid chain; its full sequence is Small ribosomal subunit protein uS15 (87 aa).

The span at 1 to 19 (MEKARKEQLIREYATHEGD) shows a compositional bias: basic and acidic residues. The tract at residues 1 to 22 (MEKARKEQLIREYATHEGDTGS) is disordered.

Belongs to the universal ribosomal protein uS15 family. Part of the 30S ribosomal subunit. Forms a bridge to the 50S subunit in the 70S ribosome, contacting the 23S rRNA.

Functionally, one of the primary rRNA binding proteins, it binds directly to 16S rRNA where it helps nucleate assembly of the platform of the 30S subunit by binding and bridging several RNA helices of the 16S rRNA. In terms of biological role, forms an intersubunit bridge (bridge B4) with the 23S rRNA of the 50S subunit in the ribosome. The chain is Small ribosomal subunit protein uS15 from Clostridium novyi (strain NT).